A 333-amino-acid chain; its full sequence is tRNA N6-adenosine threonylcarbamoyltransferase (333 aa).

The Fe cation site is built by H111 and H115. Substrate-binding positions include 134–138 (LVSGG), D167, G180, and N272. Position 300 (D300) interacts with Fe cation.

The protein belongs to the KAE1 / TsaD family. Fe(2+) serves as cofactor.

It localises to the cytoplasm. The catalysed reaction is L-threonylcarbamoyladenylate + adenosine(37) in tRNA = N(6)-L-threonylcarbamoyladenosine(37) in tRNA + AMP + H(+). Required for the formation of a threonylcarbamoyl group on adenosine at position 37 (t(6)A37) in tRNAs that read codons beginning with adenine. Is involved in the transfer of the threonylcarbamoyl moiety of threonylcarbamoyl-AMP (TC-AMP) to the N6 group of A37, together with TsaE and TsaB. TsaD likely plays a direct catalytic role in this reaction. The polypeptide is tRNA N6-adenosine threonylcarbamoyltransferase (Legionella pneumophila (strain Paris)).